The following is a 465-amino-acid chain: Methionine aminopeptidase 2-1 (465 aa).

The segment at 1 to 100 (MGSKTAENES…QSSPPRIPLA (100 aa)) is disordered. Over residues 31–40 (RGAHWSRDGD) the composition is skewed to basic and acidic residues. Positions 75–87 (SKKRKKRPKKKTS) are enriched in basic residues. His216 provides a ligand contact to substrate. Residues Asp237, Asp248, and His317 each coordinate a divalent metal cation. His325 lines the substrate pocket. Residues Glu350 and Glu446 each coordinate a divalent metal cation.

This sequence belongs to the peptidase M24A family. Methionine aminopeptidase eukaryotic type 2 subfamily. The cofactor is Co(2+). Requires Zn(2+) as cofactor. It depends on Mn(2+) as a cofactor. Fe(2+) serves as cofactor.

It localises to the cytoplasm. The enzyme catalyses Release of N-terminal amino acids, preferentially methionine, from peptides and arylamides.. In terms of biological role, cotranslationally removes the N-terminal methionine from nascent proteins. The N-terminal methionine is often cleaved when the second residue in the primary sequence is small and uncharged (Met-Ala-, Cys, Gly, Pro, Ser, Thr, or Val). The protein is Methionine aminopeptidase 2-1 of Penicillium rubens (strain ATCC 28089 / DSM 1075 / NRRL 1951 / Wisconsin 54-1255) (Penicillium chrysogenum).